We begin with the raw amino-acid sequence, 388 residues long: 3-ketoacyl-CoA thiolase (388 aa).

Catalysis depends on Cys-91, which acts as the Acyl-thioester intermediate. Residues His-343 and Cys-373 each act as proton acceptor in the active site.

The protein belongs to the thiolase-like superfamily. Thiolase family. In terms of assembly, heterotetramer of two alpha chains (FadB) and two beta chains (FadA).

It is found in the cytoplasm. It catalyses the reaction an acyl-CoA + acetyl-CoA = a 3-oxoacyl-CoA + CoA. It functions in the pathway lipid metabolism; fatty acid beta-oxidation. Functionally, catalyzes the final step of fatty acid oxidation in which acetyl-CoA is released and the CoA ester of a fatty acid two carbons shorter is formed. This chain is 3-ketoacyl-CoA thiolase, found in Photorhabdus laumondii subsp. laumondii (strain DSM 15139 / CIP 105565 / TT01) (Photorhabdus luminescens subsp. laumondii).